A 186-amino-acid polypeptide reads, in one-letter code: Small ribosomal subunit protein uS4 (186 aa).

The S4 RNA-binding domain maps to 106–170 (RRLQTIVYRK…SPLKDEDHPI (65 aa)). Positions 151 to 186 (EEEEVDYSPYSPLKDEDHPIRCEARGESPEETAAEE) are disordered. Positions 163-178 (LKDEDHPIRCEARGES) are enriched in basic and acidic residues.

This sequence belongs to the universal ribosomal protein uS4 family. Part of the 30S ribosomal subunit. Contacts protein S5. The interaction surface between S4 and S5 is involved in control of translational fidelity.

Its function is as follows. One of the primary rRNA binding proteins, it binds directly to 16S rRNA where it nucleates assembly of the body of the 30S subunit. Functionally, with S5 and S12 plays an important role in translational accuracy. This is Small ribosomal subunit protein uS4 from Methanopyrus kandleri (strain AV19 / DSM 6324 / JCM 9639 / NBRC 100938).